The chain runs to 89 residues: Putative protein T-ENOL (89 aa).

2 disordered regions span residues 1 to 31 and 54 to 89; these read MAST…KASL and RSHM…TDTR.

In terms of tissue distribution, specifically expressed in testis (at protein level).

In Rattus norvegicus (Rat), this protein is Putative protein T-ENOL.